Here is a 710-residue protein sequence, read N- to C-terminus: Putative membrane protein IgaA homolog (710 aa).

A topological domain (periplasmic) is located at residue M1. A helical membrane pass occupies residues S2–F22. Over R23–R204 the chain is Cytoplasmic. Helical transmembrane passes span E205–V225 and F226–F246. Residues A247–R339 lie on the Cytoplasmic side of the membrane. Residues S340–L360 form a helical membrane-spanning segment. Over D361–L656 the chain is Periplasmic. Residues G657–F677 form a helical membrane-spanning segment. Topologically, residues R678–I710 are cytoplasmic.

Belongs to the IgaA family.

The protein localises to the cell inner membrane. The sequence is that of Putative membrane protein IgaA homolog (yrfF) from Salmonella typhi.